Here is a 317-residue protein sequence, read N- to C-terminus: Type II methyltransferase M.NgoBI (317 aa).

The region spanning 2–302 (YKTIDLFSGI…KICSLLFPAR (301 aa)) is the SAM-dependent MTase C5-type domain. Cysteine 71 is an active-site residue.

It belongs to the class I-like SAM-binding methyltransferase superfamily. C5-methyltransferase family.

It carries out the reaction a 2'-deoxycytidine in DNA + S-adenosyl-L-methionine = a 5-methyl-2'-deoxycytidine in DNA + S-adenosyl-L-homocysteine + H(+). In terms of biological role, a methylase, recognizes the double-stranded sequence 5'-RGCGCY-3', methylates C-5 on both strands, and protects the DNA from cleavage by the NgoBI endonuclease. The chain is Type II methyltransferase M.NgoBI (ngoBIM) from Neisseria gonorrhoeae.